The chain runs to 362 residues: MVWPWVAMASRWGPLIGLAPCCLWLLGAVLLMDASARPANHSSTRERVANREENEILPPDHLNGVKLEMDGHLNRGFHQEVFLGKDLGGFDEDAEPRRSRRKLMVIFSKVDVNTDRKISAKEMQRWIMEKTAEHFQEAMEESKTHFRAVDPDGDGHVSWDEYKVKFLASKGHSEKEVADAIRLNEELKVDEETQEVLENLKDRWYQADSPPADLLLTEEEFLSFLHPEHSRGMLRFMVKEIVRDLDQDGDKQLSVPEFISLPVGTVENQQGQDIDDNWVKDRKKEFEELIDSNHDGIVTAEELESYMDPMNEYNALNEAKQMIAVADENQNHHLEPEEVLKYSEFFTGSKLVDYARSVHEEF.

Residues 1 to 36 form the signal peptide; that stretch reads MVWPWVAMASRWGPLIGLAPCCLWLLGAVLLMDASA. A glycan (N-linked (GlcNAc...) asparagine) is linked at Asn40. EF-hand domains follow at residues 98–133 and 137–172; these read RSRR…KTAE and EAME…SKGH. At Ser99 the chain carries Phosphoserine. Residues Asp111, Asn113, Asp115, Lys117, Glu122, Asp150, Asp152, Asp154, His156, and Glu161 each coordinate Ca(2+). Thr193 carries the post-translational modification Phosphothreonine. 4 consecutive EF-hand domains span residues 197–232, 233–268, 278–313, and 314–349; these read LENL…HSRG, MLRF…TVEN, WVKD…MNEY, and NALN…FTGS. Asp213 is a Ca(2+) binding site. Residue Thr217 is modified to Phosphothreonine. The Ca(2+) site is built by Glu220, Asp246, Asp248, Asp250, Gln252, and Glu257. Thr265 carries the phosphothreonine modification. 3 residues coordinate Ca(2+): Asp291, Asn293, and Asp295. The residue at position 299 (Thr299) is a Phosphothreonine. Ca(2+) contacts are provided by Glu302, Asp327, Asn329, Asn331, His333, and Glu338. Residues 309–362 are necessary for intracellular retention in Golgi apparatus lumen; that stretch reads PMNEYNALNEAKQMIAVADENQNHHLEPEEVLKYSEFFTGSKLVDYARSVHEEF.

It belongs to the CREC family. As to quaternary structure, isoform 5 interacts with STXBP1; the interaction is enhanced in presence of calcium. Isoform 5 interacts with STX3. In terms of tissue distribution, ubiquitous. Isoform 5 is expressed in pancreas.

It is found in the golgi apparatus lumen. The protein resides in the cytoplasm. The protein localises to the cell membrane. Its subcellular location is the cell projection. It localises to the bleb. Its function is as follows. May regulate calcium-dependent activities in the endoplasmic reticulum lumen or post-ER compartment. In terms of biological role, isoform 5 may be involved in the exocytosis of zymogens by pancreatic acini. This is 45 kDa calcium-binding protein (SDF4) from Homo sapiens (Human).